We begin with the raw amino-acid sequence, 1076 residues long: JmjC domain-containing histone demethylation protein 1 (1076 aa).

The region spanning 93–265 (FSQTPLEDLV…TQLRVYQVEN (173 aa)) is the JmjC domain. Threonine 159 provides a ligand contact to substrate. The Fe cation site is built by histidine 162 and aspartate 164. Lysine 179 contributes to the substrate binding site. Histidine 233 is a Fe cation binding site. Disordered stretches follow at residues 598–748 (FEEE…DPVV) and 789–1056 (KIEP…KIPS). The segment covering 610–634 (DQEEEEYDAEEPEDQEEEEEDEYQA) has biased composition (acidic residues). Over residues 653-680 (AKNDESEEVSVKKDKKEKMEKVEKDEKR) the composition is skewed to basic and acidic residues. Positions 681 to 698 (RNSKSKKDKISKEKKKKE) are enriched in basic residues. Composition is skewed to basic and acidic residues over residues 699–714 (RERI…ELRA) and 789–811 (KIEP…EPEH). Residues 935-946 (ASAPSSRHSSIS) show a composition bias toward low complexity. Composition is skewed to polar residues over residues 957-990 (FNSS…SINR) and 1004-1019 (DSLS…TYPT). Over residues 1044–1056 (QHHDDGHKHKIPS) the composition is skewed to basic and acidic residues.

This sequence belongs to the JHDM1 histone demethylase family. Fe(2+) is required as a cofactor.

Its subcellular location is the nucleus. It carries out the reaction N(6),N(6)-dimethyl-L-lysyl(36)-[histone H3] + 2 2-oxoglutarate + 2 O2 = L-lysyl(36)-[histone H3] + 2 formaldehyde + 2 succinate + 2 CO2. Functionally, histone demethylase that specifically demethylates 'Lys-36' of histone H3, thereby playing a central role in histone code. Has a role in regulating lifespan. This Caenorhabditis elegans protein is JmjC domain-containing histone demethylation protein 1 (jhdm-1).